A 429-amino-acid chain; its full sequence is Trigger factor (429 aa).

Positions 163 to 248 (GDFVVIDFVG…IKEIKVKETP (86 aa)) constitute a PPIase FKBP-type domain.

It belongs to the FKBP-type PPIase family. Tig subfamily.

The protein resides in the cytoplasm. The catalysed reaction is [protein]-peptidylproline (omega=180) = [protein]-peptidylproline (omega=0). Functionally, involved in protein export. Acts as a chaperone by maintaining the newly synthesized protein in an open conformation. Functions as a peptidyl-prolyl cis-trans isomerase. The protein is Trigger factor of Halothermothrix orenii (strain H 168 / OCM 544 / DSM 9562).